A 373-amino-acid chain; its full sequence is Cystathionine gamma-synthase/O-acetylhomoserine (thiol)-lyase (373 aa).

Position 197 is an N6-(pyridoxal phosphate)lysine (lysine 197).

It belongs to the trans-sulfuration enzymes family. In terms of assembly, homotetramer. Pyridoxal 5'-phosphate is required as a cofactor.

It localises to the cytoplasm. It catalyses the reaction O-acetyl-L-homoserine + L-cysteine = L,L-cystathionine + acetate + H(+). It carries out the reaction O-acetyl-L-homoserine + hydrogen sulfide = L-homocysteine + acetate. The protein operates within amino-acid biosynthesis; L-methionine biosynthesis via de novo pathway. Functionally, catalyzes the formation of L-cystathionine from O-acetyl-L-homoserine and L-cysteine. Cannot use O-succinyl-L-homoserine as substrate. Also exhibits O-acetylhomoserine thiolyase activity, catalyzing the synthesis of L-homocysteine from O-acetyl-L-homoserine and sulfide. The protein is Cystathionine gamma-synthase/O-acetylhomoserine (thiol)-lyase (metI) of Bacillus subtilis (strain 168).